We begin with the raw amino-acid sequence, 145 residues long: Ribonuclease H (145 aa).

An RNase H type-1 domain is found at 2-143 (SKKEVAIYTD…ADSLARKAII (142 aa)). Residues Asp-11, Glu-49, Asp-71, and Asp-135 each contribute to the Mg(2+) site.

It belongs to the RNase H family. In terms of assembly, monomer. It depends on Mg(2+) as a cofactor.

It localises to the cytoplasm. The catalysed reaction is Endonucleolytic cleavage to 5'-phosphomonoester.. Its function is as follows. Endonuclease that specifically degrades the RNA of RNA-DNA hybrids. The chain is Ribonuclease H from Wolbachia sp. subsp. Drosophila simulans (strain wRi).